The primary structure comprises 343 residues: Anthranilate 1,2-dioxygenase electron transfer component (343 aa).

Residues 3-96 enclose the 2Fe-2S ferredoxin-type domain; the sequence is HSVALNFADG…NAAFYFDHHS (94 aa). 4 residues coordinate [2Fe-2S] cluster: Cys-40, Cys-45, Cys-48, and Cys-80. Positions 98 to 338 are ferredoxin-reductase; it reads ICNAGETLKI…HIYSEKFLQS (241 aa). The 104-residue stretch at 103–206 folds into the FAD-binding FR-type domain; sequence ETLKIATVVT…EAPLGSFYLR (104 aa).

It belongs to the bacterial ring-hydroxylating dioxygenase ferredoxin reductase family. As to quaternary structure, monomer. It is part of the anthranilate dioxygenase two component enzyme system. The other component is an oxygenase component consisting of 3 large (AntA) and 3 small (AntB) subunits. Requires FAD as cofactor. It depends on [2Fe-2S] cluster as a cofactor.

It catalyses the reaction 2 reduced [2Fe-2S]-[ferredoxin] + NAD(+) + H(+) = 2 oxidized [2Fe-2S]-[ferredoxin] + NADH. The protein operates within aromatic compound metabolism; anthranilate degradation via hydroxylation; catechol from anthranilate: step 1/1. Its function is as follows. Electron transfer component of anthranilate 1,2-dioxygenase system. This chain is Anthranilate 1,2-dioxygenase electron transfer component, found in Acinetobacter baylyi (strain ATCC 33305 / BD413 / ADP1).